A 181-amino-acid polypeptide reads, in one-letter code: Large ribosomal subunit protein uL5 (181 aa).

This sequence belongs to the universal ribosomal protein uL5 family. As to quaternary structure, part of the 50S ribosomal subunit; part of the 5S rRNA/L5/L18/L25 subcomplex. Contacts the 5S rRNA and the P site tRNA. Forms a bridge to the 30S subunit in the 70S ribosome.

In terms of biological role, this is one of the proteins that bind and probably mediate the attachment of the 5S RNA into the large ribosomal subunit, where it forms part of the central protuberance. In the 70S ribosome it contacts protein S13 of the 30S subunit (bridge B1b), connecting the 2 subunits; this bridge is implicated in subunit movement. Contacts the P site tRNA; the 5S rRNA and some of its associated proteins might help stabilize positioning of ribosome-bound tRNAs. The polypeptide is Large ribosomal subunit protein uL5 (Mesomycoplasma hyopneumoniae (strain 232) (Mycoplasma hyopneumoniae)).